Reading from the N-terminus, the 1292-residue chain is (E3-independent) E2 ubiquitin-conjugating enzyme (1292 aa).

Positions 1-37 are enriched in pro residues; it reads MADPAAPTPAAPAPAQAPAPAPEAVPAPAAAPVPAPA. Disordered regions lie at residues 1-56 and 85-114; these read MADP…EAGS and EDSD…EGRA. Residues 38–56 are compositionally biased toward low complexity; sequence PASDSASGPSSDSGPEAGS. Phosphoserine is present on residues Ser-50, Ser-87, Ser-89, Ser-399, and Ser-401. 3 disordered regions span residues 401–459, 472–519, and 714–746; these read SPDT…AGEQ, RLHS…IPLS, and IEES…TDNG. A compositionally biased stretch (basic and acidic residues) spans 406–427; it reads CSRDHSMEDPDKKGESKTKSEA. Position 441 is a phosphoserine (Ser-441). Residues 478–490 are compositionally biased toward acidic residues; the sequence is QDADDEAADDTDD. Phosphothreonine is present on residues Thr-488 and Thr-491. A compositionally biased stretch (low complexity) spans 491 to 510; that stretch reads TSSVTSSASSTTSSQSGSGT. The Nuclear localization signal signature appears at 512–536; sequence RKKSIPLSIKNLKRKHKRKKNKITR. Residue Ser-515 is modified to Phosphoserine. Residues 732–742 show a composition bias toward acidic residues; sequence DEWEDDSDSWE. A coiled-coil region spans residues 812–882; the sequence is RELKEAIKIL…IVEEEKMEAV (71 aa). Ser-836 carries the post-translational modification Phosphoserine. The residue at position 838 (Thr-838) is a Phosphothreonine. At Ser-839 the chain carries Phosphoserine. Over residues 882–893 the composition is skewed to basic and acidic residues; that stretch reads VPDVERKEDKPE. Positions 882–903 are disordered; that stretch reads VPDVERKEDKPEGQSPVKAEWP. Position 896 is a phosphoserine (Ser-896). One can recognise a UBC core domain in the interval 953–1113; sequence KFFSTVRKEM…ALIRVVQSMT (161 aa). Cys-1040 acts as the Glycyl thioester intermediate in catalysis. Residues 1160-1248 are disordered; the sequence is NGVPKASSSP…KSYRSFLPEK (89 aa).

The protein belongs to the ubiquitin-conjugating enzyme family. As to quaternary structure, interacts with CPNE1 (via VWFA domain) and CPNE4 (via VWFA domain). Interacts with UBR2. Post-translationally, phosphorylated. Phosphorylation affects subcellular location. In terms of processing, ubiquitinated: autoubiquitinates, possibly affecting its subcellular location. Predominantly expressed in skeletal muscle and heart.

Its subcellular location is the cytoplasm. The protein resides in the nucleus. The catalysed reaction is S-ubiquitinyl-[E1 ubiquitin-activating enzyme]-L-cysteine + [acceptor protein]-L-lysine = [E1 ubiquitin-activating enzyme]-L-cysteine + N(6)-monoubiquitinyl-[acceptor protein]-L-lysine.. It functions in the pathway protein modification; protein ubiquitination. Inhibited by phenylarsine oxide (PAO). E2/E3 hybrid ubiquitin-protein ligase that displays both E2 and E3 ligase activities and mediates monoubiquitination of target proteins. Negatively regulates TRAF6-mediated NF-kappa-B activation independently of its E2 activity. Acts as a positive regulator of BMP7 signaling by mediating monoubiquitination of SMAD6, thereby regulating adipogenesis. Mediates monoubiquitination at different sites of the nuclear localization signal (NLS) of BAP1, leading to cytoplasmic retention of BAP1. Also able to monoubiquitinate the NLS of other chromatin-associated proteins, such as INO80 and CXXC1, affecting their subcellular location. Acts as a regulator of retrograde transport by assisting the TRIM27:MAGEL2 E3 ubiquitin ligase complex to mediate 'Lys-63'-linked ubiquitination of WASHC1, leading to promote endosomal F-actin assembly. This is (E3-independent) E2 ubiquitin-conjugating enzyme (UBE2O) from Homo sapiens (Human).